A 258-amino-acid chain; its full sequence is Thrombin-like enzyme CPI-enzyme 2 (258 aa).

Positions 1-18 (MVLIRVLANLLILQLSYA) are cleaved as a signal peptide. A propeptide spanning residues 19–24 (QKSSEL) is cleaved from the precursor. Positions 25–249 (VIGGDECNIN…YTDWIENIIA (225 aa)) constitute a Peptidase S1 domain. Cystine bridges form between Cys-31/Cys-163, Cys-50/Cys-66, Cys-98/Cys-256, Cys-142/Cys-210, Cys-174/Cys-189, and Cys-200/Cys-225. Asn-44 carries an N-linked (GlcNAc...) asparagine glycan. His-65 (charge relay system) is an active-site residue. N-linked (GlcNAc...) asparagine glycans are attached at residues Asn-79 and Asn-103. Asp-110 serves as the catalytic Charge relay system. N-linked (GlcNAc...) asparagine glycosylation occurs at Asn-121. Catalysis depends on Ser-204, which acts as the Charge relay system.

It belongs to the peptidase S1 family. Snake venom subfamily. As to quaternary structure, monomer. In terms of processing, N-glycosylated. Expressed by the venom gland.

Its subcellular location is the secreted. Thrombin-like snake venom serine protease that cleaves fibrinogen beta (FGB) releasing fibrinopeptide B. Promotes capillary permeability-increasing activity through the release of peptides from the beta-chain of fibrinogen. This is Thrombin-like enzyme CPI-enzyme 2 from Gloydius ussuriensis (Ussuri mamushi).